A 528-amino-acid chain; its full sequence is MGPEEVMVQASSPGLISATEVLVAAATFCLLLLLTQTRRQHAPKGLRSPPGPRGLPMLGSVLELRKDPHLVLTRLSRKYGDVMEVTIGSRPVVVLSGLETIKQALVRQAEDFMGRPDLYSFRHITDGQSLTFSTDTGEMWKARRKLAQNALKNFSIAASPTASSSCLLEEHVSTEASYLVTKFLQLMEEKQSFDPYRYMVVSVANVICAICFGKRYDHDDQELLSVVNVVDEFVDVTAAGNPADFIPLLRYLPSRNMDSFLDFNKRFMKLLQTAVEEHYQTFDKNNIRDVTDSLIEQCVEKKAEANGATQIPNEKIINLVNDIFGAGFDTVTTALSWSLMYLVTYPHMQKKIQAELDQTIGRERRPRLSDRGMLPYTEAFILEMFRHSSFMPFTIPHSTTRDTVLNGYYIPKDRCVFINQWQVNHDEKLWKDPQAFNPERFLNAEGTEVNKVDAEKVMTFGLGKRRCIGENIGKWEVFLFLSTLLQQLEFSIQDGKKADMTPIYGLSMKHKRCEHFQVKKRFSMKSSN.

Cysteine 467 is a heme binding site.

It belongs to the cytochrome P450 family. Requires heme as cofactor.

The protein resides in the endoplasmic reticulum membrane. It is found in the microsome membrane. The catalysed reaction is an organic molecule + reduced [NADPH--hemoprotein reductase] + O2 = an alcohol + oxidized [NADPH--hemoprotein reductase] + H2O + H(+). Functionally, cytochromes P450 are a group of heme-thiolate monooxygenases. In liver microsomes, this enzyme is involved in an NADPH-dependent electron transport pathway. It oxidizes a variety of structurally unrelated compounds, including steroids, fatty acids, and xenobiotics. The sequence is that of Cytochrome P450 1A5 (CYP1A5) from Gallus gallus (Chicken).